The primary structure comprises 61 residues: Cytotoxin 1 (61 aa).

4 disulfide bridges follow: cysteine 3–cysteine 22, cysteine 15–cysteine 39, cysteine 43–cysteine 54, and cysteine 55–cysteine 60.

Belongs to the three-finger toxin family. Short-chain subfamily. Type IB cytotoxin sub-subfamily. Expressed by the venom gland.

The protein resides in the secreted. Functionally, this protein lyses red blood cells and has cardiotoxic and hypotensive activities. This is Cytotoxin 1 from Hemachatus haemachatus (Rinkhals).